Consider the following 385-residue polypeptide: Glucose-fructose oxidoreductase domain-containing protein 2 (385 aa).

The signal sequence occupies residues 1–25 (MKMLPGVGVFGTGSSARVLVPLLRA).

This sequence belongs to the Gfo/Idh/MocA family.

It is found in the secreted. The protein resides in the extracellular space. The protein localises to the extracellular matrix. Functionally, promotes matrix assembly. The chain is Glucose-fructose oxidoreductase domain-containing protein 2 (GFOD2) from Homo sapiens (Human).